A 181-amino-acid chain; its full sequence is Acireductone dioxygenase (181 aa).

The Fe(2+) site is built by His100, His102, Glu106, and His145. Residues His100, His102, Glu106, and His145 each coordinate Ni(2+).

This sequence belongs to the acireductone dioxygenase (ARD) family. Monomer. The cofactor is Fe(2+). Requires Ni(2+) as cofactor.

The catalysed reaction is 1,2-dihydroxy-5-(methylsulfanyl)pent-1-en-3-one + O2 = 3-(methylsulfanyl)propanoate + CO + formate + 2 H(+). The enzyme catalyses 1,2-dihydroxy-5-(methylsulfanyl)pent-1-en-3-one + O2 = 4-methylsulfanyl-2-oxobutanoate + formate + 2 H(+). It functions in the pathway amino-acid biosynthesis; L-methionine biosynthesis via salvage pathway; L-methionine from S-methyl-5-thio-alpha-D-ribose 1-phosphate: step 5/6. Functionally, catalyzes 2 different reactions between oxygen and the acireductone 1,2-dihydroxy-3-keto-5-methylthiopentene (DHK-MTPene) depending upon the metal bound in the active site. Fe-containing acireductone dioxygenase (Fe-ARD) produces formate and 2-keto-4-methylthiobutyrate (KMTB), the alpha-ketoacid precursor of methionine in the methionine recycle pathway. Ni-containing acireductone dioxygenase (Ni-ARD) produces methylthiopropionate, carbon monoxide and formate, and does not lie on the methionine recycle pathway. This chain is Acireductone dioxygenase, found in Trichodesmium erythraeum (strain IMS101).